The primary structure comprises 204 residues: Minor allergen Cla h 7 (204 aa).

In terms of domain architecture, Flavodoxin-like spans 5-195 (IAIIFYSTWG…ELTAQGKAFY (191 aa)).

The protein belongs to the WrbA family.

It is found in the cytoplasm. This is Minor allergen Cla h 7 (CLAH7) from Davidiella tassiana (Mycosphaerella tassiana).